The primary structure comprises 314 residues: Olfactory receptor 5B12 (314 aa).

The Extracellular segment spans residues 1-23; sequence MENNTEVTEFILVGLTDDPELQI. An N-linked (GlcNAc...) asparagine glycan is attached at Asn-3. A helical membrane pass occupies residues 24–44; sequence PLFIVFLFIYLITLVGNLGMI. Residues 45–52 lie on the Cytoplasmic side of the membrane; it reads ELILLDSC. The chain crosses the membrane as a helical span at residues 53–73; that stretch reads LHTPMYFFLSNLSLVDFGYSS. The Extracellular portion of the chain corresponds to 74-97; the sequence is AVTPKVMVGFLTGDKFILYNACAT. A disulfide bridge connects residues Cys-95 and Cys-187. Residues 98–118 form a helical membrane-spanning segment; the sequence is QFFFFVAFITAESFLLASMAY. The Cytoplasmic portion of the chain corresponds to 119–137; it reads DRYAALCKPLHYTTTMTTN. The helical transmembrane segment at 138–158 threads the bilayer; sequence VCACLAIGSYICGFLNASIHT. Residues 159-194 lie on the Extracellular side of the membrane; it reads GNTFRLSFCRSNVVEHFFCDAPPLLTLSCSDNYISE. Residues 195-215 traverse the membrane as a helical segment; sequence MVIFFVVGFNDLFSILVILIS. Over 216–235 the chain is Cytoplasmic; sequence YLFIFITIMKMRSPEGRQKA. The helical transmembrane segment at 236-256 threads the bilayer; sequence FSTCASHLTAVSIFYGTGIFM. The Extracellular segment spans residues 257 to 269; the sequence is YLRPNSSHFMGTD. Asn-261 carries N-linked (GlcNAc...) asparagine glycosylation. Residues 270 to 290 traverse the membrane as a helical segment; it reads KMASVFYAIVIPMLNPLVYSL. Over 291-314 the chain is Cytoplasmic; sequence RNKEVKSAFKKTVGKAKASIGFIF.

It belongs to the G-protein coupled receptor 1 family.

It is found in the cell membrane. Odorant receptor. This chain is Olfactory receptor 5B12 (OR5B12), found in Homo sapiens (Human).